Reading from the N-terminus, the 175-residue chain is Isopentenyl-diphosphate Delta-isomerase (175 aa).

Positions 22 and 29 each coordinate Mn(2+). One can recognise a Nudix hydrolase domain in the interval 27–160 (KLHRAFSVLL…PAAYTPWLAE (134 aa)). Residue Cys64 is part of the active site. Cys64 is a Mg(2+) binding site. Mn(2+) is bound at residue His66. Residue Glu84 coordinates Mg(2+). Residues Glu110 and Glu112 each coordinate Mn(2+). Residue Glu112 is part of the active site.

This sequence belongs to the IPP isomerase type 1 family. Mg(2+) serves as cofactor. Requires Mn(2+) as cofactor.

The protein resides in the cytoplasm. It carries out the reaction isopentenyl diphosphate = dimethylallyl diphosphate. The protein operates within isoprenoid biosynthesis; dimethylallyl diphosphate biosynthesis; dimethylallyl diphosphate from isopentenyl diphosphate: step 1/1. Catalyzes the 1,3-allylic rearrangement of the homoallylic substrate isopentenyl (IPP) to its highly electrophilic allylic isomer, dimethylallyl diphosphate (DMAPP). The polypeptide is Isopentenyl-diphosphate Delta-isomerase (Nocardia farcinica (strain IFM 10152)).